The following is a 530-amino-acid chain: UDP-glucuronosyltransferase 2B17 (530 aa).

Residues 1 to 23 (MSLKWMSVFLLMQLSCYFSSGSC) form the signal peptide. A glycan (N-linked (GlcNAc...) asparagine) is linked at Asn-65. An N6-succinyllysine modification is found at Lys-136. N-linked (GlcNAc...) asparagine glycans are attached at residues Asn-316 and Asn-483. The helical transmembrane segment at 495–515 (IAFLLACVATMIFMITKCCLF) threads the bilayer.

This sequence belongs to the UDP-glycosyltransferase family. As to expression, expressed in various tissues including the liver, kidney, testis, uterus, placenta, mammary gland, adrenal gland, skin and prostate.

The protein resides in the endoplasmic reticulum membrane. It carries out the reaction glucuronate acceptor + UDP-alpha-D-glucuronate = acceptor beta-D-glucuronoside + UDP + H(+). The enzyme catalyses 17alpha-estradiol + UDP-alpha-D-glucuronate = 17alpha-estradiol 3-O-(beta-D-glucuronate) + UDP + H(+). The catalysed reaction is 17alpha-estradiol + UDP-alpha-D-glucuronate = 17alpha-estradiol 17-O-(beta-D-glucuronate) + UDP + H(+). It catalyses the reaction 17beta-estradiol + UDP-alpha-D-glucuronate = 17beta-estradiol 17-O-(beta-D-glucuronate) + UDP + H(+). It carries out the reaction 17beta-hydroxy-5alpha-androstan-3-one + UDP-alpha-D-glucuronate = 5alpha-dihydrotestosterone 17-O-(beta-D-glucuronate) + UDP + H(+). The enzyme catalyses testosterone + UDP-alpha-D-glucuronate = testosterone 17-O-(beta-D-glucuronate) + UDP + H(+). In terms of biological role, UDP-glucuronosyltransferase (UGT) that catalyzes phase II biotransformation reactions in which lipophilic substrates are conjugated with glucuronic acid to increase the metabolite's water solubility, thereby facilitating excretion into either the urine or bile. Catalyzes the glucuronidation of endogenous steroid hormones such as androgens (epitestosterone, androsterone) and estrogens (estradiol, epiestradiol). The sequence is that of UDP-glucuronosyltransferase 2B17 from Homo sapiens (Human).